Here is a 130-residue protein sequence, read N- to C-terminus: Protein ApaG (130 aa).

One can recognise an ApaG domain in the interval 3 to 127 (RALTRDIEVT…FSLDSPGLVR (125 aa)).

The polypeptide is Protein ApaG (Rhizobium meliloti (strain 1021) (Ensifer meliloti)).